The following is an 89-amino-acid chain: Tuberculin-active protein (89 aa).

A disulfide bridge connects residues C27 and C59. Positions 61–89 are disordered; sequence DGGSESEGKNGSQMRLIADVGPESATVAK.

Tuberculin is the soluble, proteinaceous cell substance of the bacterium, to which infected animals become hypersensitive and react characteristically to dermal injections. The sequence is that of Tuberculin-active protein from Mycobacterium tuberculosis.